A 231-amino-acid polypeptide reads, in one-letter code: Superoxide dismutase [Mn], mitochondrial (231 aa).

Residues 1–27 (MALRTLASRKTLAAAALPLAAAAAARG) constitute a mitochondrion transit peptide. Mn(2+) contacts are provided by H55, H103, D192, and H196.

It belongs to the iron/manganese superoxide dismutase family. Homotetramer. It depends on Mn(2+) as a cofactor.

It localises to the mitochondrion matrix. It carries out the reaction 2 superoxide + 2 H(+) = H2O2 + O2. In terms of biological role, destroys superoxide anion radicals which are normally produced within the cells and which are toxic to biological systems. The protein is Superoxide dismutase [Mn], mitochondrial (SODA) of Oryza sativa subsp. japonica (Rice).